Consider the following 314-residue polypeptide: Tetraacyldisaccharide 4'-kinase (314 aa).

54 to 61 (YIGGTGKT) serves as a coordination point for ATP.

Belongs to the LpxK family.

It carries out the reaction a lipid A disaccharide + ATP = a lipid IVA + ADP + H(+). The protein operates within glycolipid biosynthesis; lipid IV(A) biosynthesis; lipid IV(A) from (3R)-3-hydroxytetradecanoyl-[acyl-carrier-protein] and UDP-N-acetyl-alpha-D-glucosamine: step 6/6. Transfers the gamma-phosphate of ATP to the 4'-position of a tetraacyldisaccharide 1-phosphate intermediate (termed DS-1-P) to form tetraacyldisaccharide 1,4'-bis-phosphate (lipid IVA). The chain is Tetraacyldisaccharide 4'-kinase from Pelagibacter ubique (strain HTCC1062).